Consider the following 485-residue polypeptide: NADH-quinone oxidoreductase subunit N (485 aa).

The next 14 helical transmembrane spans lie at 3-23, 30-50, 67-87, 96-116, 120-140, 154-174, 202-222, 247-267, 271-291, 299-319, 332-352, 375-395, 411-431, and 453-473; these read LFMPEIIILITALLVIITDLF, HLAYLSLLGLGAAAVATVLNW, YASFFRILFISLSGLVIMASV, FQGEYYALVLLALLGMIMMAS, LITMYLSLELAGLAFYVLVGF, LLLGGVASAMLVFGLVLIYGF, FILGIILTITGLGFKVAAVPF, AAGFALFLRLFYTVFTDPLAL, WALIVAVLATAGMTLGNVLAI, MLGYSSIAHAGYILVALAAVG, LFYLVAFAVSDLVAFVSIIAI, ASALTLALLSLTGFPPLAGFL, WLMIVAAVNTVISAVFYFNVI, and LALGISGLAVLIFGIIPETLL.

The protein belongs to the complex I subunit 2 family. In terms of assembly, NDH-1 is composed of 14 different subunits. Subunits NuoA, H, J, K, L, M, N constitute the membrane sector of the complex.

The protein localises to the cell membrane. It carries out the reaction a quinone + NADH + 5 H(+)(in) = a quinol + NAD(+) + 4 H(+)(out). Its function is as follows. NDH-1 shuttles electrons from NADH, via FMN and iron-sulfur (Fe-S) centers, to quinones in the respiratory chain. The immediate electron acceptor for the enzyme in this species is believed to be ubiquinone. Couples the redox reaction to proton translocation (for every two electrons transferred, four hydrogen ions are translocated across the cytoplasmic membrane), and thus conserves the redox energy in a proton gradient. The sequence is that of NADH-quinone oxidoreductase subunit N from Dehalococcoides mccartyi (strain ATCC BAA-2100 / JCM 16839 / KCTC 5957 / BAV1).